The following is a 521-amino-acid chain: Protein disulfide-isomerase A5 (521 aa).

The N-terminal stretch at 1–25 (MARVVPAWLLLPLAVWVVLPTWLSS) is a signal peptide. Thioredoxin domains follow at residues 136–263 (FLKD…NPQP), 274–386 (ADEG…NPES), and 387–508 (PPPP…TLRE). Intrachain disulfides connect C184–C187, C307–C310, and C428–C431. Residues 518-521 (KEEL) carry the Prevents secretion from ER motif.

The protein belongs to the protein disulfide isomerase family.

It localises to the endoplasmic reticulum lumen. The catalysed reaction is Catalyzes the rearrangement of -S-S- bonds in proteins.. The protein is Protein disulfide-isomerase A5 (PDIA5) of Bos taurus (Bovine).